The primary structure comprises 272 residues: Phosphoglycolate phosphatase (272 aa).

Catalysis depends on aspartate 19, which acts as the Nucleophile. Residues aspartate 19, aspartate 21, and aspartate 182 each contribute to the Mg(2+) site.

Belongs to the HAD-like hydrolase superfamily. CbbY/CbbZ/Gph/YieH family. It depends on Mg(2+) as a cofactor.

The catalysed reaction is 2-phosphoglycolate + H2O = glycolate + phosphate. The protein operates within organic acid metabolism; glycolate biosynthesis; glycolate from 2-phosphoglycolate: step 1/1. Functionally, specifically catalyzes the dephosphorylation of 2-phosphoglycolate. Is involved in the dissimilation of the intracellular 2-phosphoglycolate formed during the DNA repair of 3'-phosphoglycolate ends, a major class of DNA lesions induced by oxidative stress. In Pseudomonas fluorescens (strain ATCC BAA-477 / NRRL B-23932 / Pf-5), this protein is Phosphoglycolate phosphatase.